Reading from the N-terminus, the 395-residue chain is Multiple organellar RNA editing factor 8, chloroplastic/mitochondrial (395 aa).

The transit peptide at 1–56 (MATHTISRSILCRPAKSLSFLFTRSFASSAPLAKSPASSLLSRSRPLVAAFSSVFR) directs the protein to the chloroplast and mitochondrion. The span at 211–236 (ANERNRRNDRPRNNDRSRNFERRREN) shows a compositional bias: basic and acidic residues. Residues 211-395 (ANERNRRNDR…RDGSGNPYQG (185 aa)) form a disordered region. Pro residues predominate over residues 240–300 (GPPPQRPPMG…GPRHPPPYGA (61 aa)). Residues 313–334 (QNYGGTPPPNYGGAPPANNMGG) are compositionally biased toward low complexity. Over residues 335–355 (APPPNYGGGPPPQYGAVPPPQ) the composition is skewed to pro residues. Positions 356-385 (YGGAPPQNNNYQQQGSGMQQPQYQNNYPPN) are enriched in low complexity.

It belongs to the MORF family. As to quaternary structure, interacts with protoporphyrinogen oxidase 1 PPOX1. Interacts with PCMP-H52/MEF10. Homodimer and heterodimers with MORF1/RIP8, MORF2/RIP2, MORF3/RIP3, MORF4/RIP4, MORF5/RIP5, MORF6/RIP6 and MORF7/RIP7. Interacts with RBG3/ORRM3. Interacts with PCMP-A2/PMD1. Interacts with ORRM1 and VAT3/OZ1. Interacts with PCMP-H13/MEF35. Interacts with RBG5/ORRM4. Interacts with ORRM6.

It localises to the mitochondrion. It is found in the plastid. Its subcellular location is the chloroplast. In terms of biological role, involved in organellar RNA editing. Required for the processing of numerous RNA editing sites in mitochondria and plastids. Binds to the plastid RARE1 factor, a pentatricopeptide repeat-containing protein involved in RNA editing. This chain is Multiple organellar RNA editing factor 8, chloroplastic/mitochondrial, found in Arabidopsis thaliana (Mouse-ear cress).